A 449-amino-acid polypeptide reads, in one-letter code: UPF0761 membrane protein Cpha266_1653 (449 aa).

6 helical membrane passes run 77–97, 133–153, 173–193, 214–234, 244–264, and 277–297; these read LLSL…FPVF, SVPL…ISTI, FTLY…SLVA, LLSF…YMLV, AVYG…WFVF, and GALS…VVVL.

Belongs to the UPF0761 family.

It is found in the cell inner membrane. This chain is UPF0761 membrane protein Cpha266_1653, found in Chlorobium phaeobacteroides (strain DSM 266 / SMG 266 / 2430).